The primary structure comprises 457 residues: Nuclear hormone receptor family member odr-7 (457 aa).

2 disordered regions span residues 57 to 95 (EQPN…DNDA) and 230 to 252 (KQES…LQQP). A DNA-binding region (nuclear receptor) is located at residues 327 to 407 (LHDCQVCLST…IGMLPENVQH (81 aa)). 2 consecutive NR C4-type zinc fingers follow at residues 330–351 (CQVC…CAAC) and 367–395 (CKRN…MKRC). A disordered region spans residues 435–457 (QPSGSAAQPITVSSSESPRHTTN).

Belongs to the nuclear hormone receptor family. NR0 subfamily. As to quaternary structure, heterodimer with a partner that confers DNA binding capacity or a nuclear hormone receptor whose DNA binding it inhibits. Expressed predominantly in the AWA neurons.

It localises to the nucleus. The protein localises to the cytoplasm. The protein resides in the perinuclear region. In terms of biological role, required for the function of one pair of chemosensory neurons called AWA neurons that are involved in chemotaxis to volatile odorants. Acts in a pathway that specifies olfactory neuronal fate. Regulates the transcription of olfactory signaling molecules such as odr-10 that specify AWA neuron identity and function. Represses the expression in AWA neurons of factors such as str-2 which specify AWC neuron identity. In Caenorhabditis elegans, this protein is Nuclear hormone receptor family member odr-7 (odr-7).